The chain runs to 252 residues: Chitooligosaccharide deacetylase (252 aa).

H61 and H125 together coordinate Mg(2+).

The protein belongs to the YdjC deacetylase family. ChbG subfamily. Homodimer. It depends on Mg(2+) as a cofactor.

Its subcellular location is the cytoplasm. It catalyses the reaction N,N'-diacetylchitobiose + H2O = N-acetyl-beta-D-glucosaminyl-(1-&gt;4)-D-glucosamine + acetate. The enzyme catalyses diacetylchitobiose-6'-phosphate + H2O = N'-monoacetylchitobiose-6'-phosphate + acetate. Its pathway is glycan degradation; chitin degradation. In terms of biological role, involved in the degradation of chitin. ChbG is essential for growth on the acetylated chitooligosaccharides chitobiose and chitotriose but is dispensable for growth on cellobiose and chitosan dimer, the deacetylated form of chitobiose. Deacetylation of chitobiose-6-P and chitotriose-6-P is necessary for both the activation of the chb promoter by the regulatory protein ChbR and the hydrolysis of phosphorylated beta-glucosides by the phospho-beta-glucosidase ChbF. Catalyzes the removal of only one acetyl group from chitobiose-6-P to yield monoacetylchitobiose-6-P, the inducer of ChbR and the substrate of ChbF. The polypeptide is Chitooligosaccharide deacetylase (Escherichia coli O8 (strain IAI1)).